The primary structure comprises 659 residues: tRNA-guanine(15) transglycosylase (659 aa).

Catalysis depends on Asp-84, which acts as the Nucleophile. Residues Asp-119 and Ala-190 each contribute to the substrate site. Zn(2+) contacts are provided by Cys-273, Cys-275, and Cys-278. The region spanning 583–658 (KNRVVVNKDS…QAIKTRKGMK (76 aa)) is the PUA domain.

Belongs to the archaeosine tRNA-ribosyltransferase family. Requires Zn(2+) as cofactor.

It catalyses the reaction guanosine(15) in tRNA + 7-cyano-7-deazaguanine = 7-cyano-7-carbaguanosine(15) in tRNA + guanine. It participates in tRNA modification; archaeosine-tRNA biosynthesis. Exchanges the guanine residue with 7-cyano-7-deazaguanine (preQ0) at position 15 in the dihydrouridine loop (D-loop) of archaeal tRNAs. In Methanobrevibacter smithii (strain ATCC 35061 / DSM 861 / OCM 144 / PS), this protein is tRNA-guanine(15) transglycosylase.